Consider the following 321-residue polypeptide: Ras association domain-containing protein 4 (321 aa).

Residues 79-159 form a disordered region; it reads HLPSTSWMPR…RPKCRAPGEA (81 aa). Polar residues predominate over residues 98–110; that stretch reads SPQNGNITAQGPS. Ser-141 carries the post-translational modification Phosphoserine. A Ras-associating domain is found at 174–262; it reads YNHKTSVFTP…ARIFLMEADL (89 aa). In terms of domain architecture, SARAH spans 270–317; that stretch reads VAQYIKFEMPVLDSFVEKLKEEEEREIIKLTMKFQALRLTMLQRLEQL.

Interacts directly with activated KRAS in a GTP-dependent manner. Widely expressed. Frequently down-regulated in tumor cell lines.

Potential tumor suppressor. May act as a KRAS effector protein. May promote apoptosis and cell cycle arrest. The protein is Ras association domain-containing protein 4 (RASSF4) of Homo sapiens (Human).